A 374-amino-acid polypeptide reads, in one-letter code: Translocating chain-associated membrane protein 1 (374 aa).

Over 1-29 the chain is Cytoplasmic; the sequence is MAIRKKSSKNPPVLSHEFVLQNHADIVSC. A helical transmembrane segment spans residues 30–50; the sequence is VAMVFLLGLMFEITAKVSIIF. The Lumenal portion of the chain corresponds to 51–81; the sequence is VTLQYNVTLPATEEQATESAFLYYYGIKDLA. Asn-56 is a glycosylation site (N-linked (GlcNAc...) asparagine). A helical transmembrane segment spans residues 82-102; that stretch reads TVFFYMLVAIIIHAIIQEYVL. The Cytoplasmic segment spans residues 103-121; the sequence is DKINRRMHFSKTKHSKFNE. The 210-residue stretch at 117–326 folds into the TLC domain; sequence SKFNESGQLS…NFQLRRWREH (210 aa). Residues 122-142 form a helical membrane-spanning segment; the sequence is SGQLSAFYLFSCIWGTFILIS. Residues 143 to 159 lie on the Lumenal side of the membrane; it reads ENYISDPTILWRAYPHN. Residues 160 to 180 form a helical membrane-spanning segment; it reads LMTFQMKFFYISQLAYWFHAF. Topologically, residues 181 to 192 are cytoplasmic; it reads PELYFQKTKKED. Residues 193–213 traverse the membrane as a helical segment; the sequence is IPRQLVYIGLYLFHIAGAYLL. Asn-214 is a topological domain (lumenal). Residues 215–235 traverse the membrane as a helical segment; that stretch reads LNHLGLVLLVLHYFVEFLFHI. At 236–251 the chain is on the cytoplasmic side; that stretch reads SRLFYFSDEKYQKGFS. Residues 252–272 traverse the membrane as a helical segment; sequence LWAVLFVLGRLLTLILSVLTV. Over 273–297 the chain is Lumenal; sequence GFGLARAENQKLDFSTGNFNVLAVR. A helical membrane pass occupies residues 298-318; sequence IAVLASICITQAFMMWKFINF. Over 319–374 the chain is Cytoplasmic; that stretch reads QLRRWREHSAFQAPAVKKKPPVTKGRSSRKGTENGVNGTVTSNGADSPRNRKEKSS. A disordered region spans residues 331 to 374; that stretch reads APAVKKKPPVTKGRSSRKGTENGVNGTVTSNGADSPRNRKEKSS. The segment covering 334 to 347 has biased composition (basic residues); it reads VKKKPPVTKGRSSR. Residues 352–363 show a composition bias toward polar residues; the sequence is NGVNGTVTSNGA. At Ser-365 the chain carries Phosphoserine.

This sequence belongs to the TRAM family. As to quaternary structure, interacts with SEC61B. May interact with Derlin-1/DERL1. In terms of processing, N-glycosylated.

It is found in the endoplasmic reticulum membrane. Functionally, involved in the translocation of nascent protein chains into or through the endoplasmic reticulum (ER) membrane by facilitating the proper chain positioning at the SEC61 channel. Regulates the exposure of nascent secretory protein chain to the cytosol during translocation into the ER. May affect the phospholipid bilayer in the vicinity of the lateral gate of the SEC61 channel, thereby facilitating ER protein transport. Intimately associates with transmembrane (TM) domain of nascent membrane proteins during the entire integration process into the ER membrane. Associates with the second TM domain of G-protein-coupled receptor opsin/OPSD nascent chain in the ER membrane, which may facilitate its integration into the membrane. Under conditions of ER stress, participates in the disposal of misfolded ER membrane proteins during the unfolded protein response (UPR), an integrated stress response (ISR) pathway, by selectively retrotranslocating misfolded ER-membrane proteins from the ER into the cytosol where they are ubiquitinated and degraded by the proteasome. This is Translocating chain-associated membrane protein 1 (TRAM1) from Bos taurus (Bovine).